A 164-amino-acid chain; its full sequence is Endoribonuclease YbeY (164 aa).

3 residues coordinate Zn(2+): histidine 111, histidine 115, and histidine 121. Residues 142–164 (GYPDPYADDETETSPTVTTKDSE) form a disordered region. Residues 154–164 (TSPTVTTKDSE) are compositionally biased toward polar residues.

This sequence belongs to the endoribonuclease YbeY family. It depends on Zn(2+) as a cofactor.

Its subcellular location is the cytoplasm. Functionally, single strand-specific metallo-endoribonuclease involved in late-stage 70S ribosome quality control and in maturation of the 3' terminus of the 16S rRNA. This Pseudomonas fluorescens (strain Pf0-1) protein is Endoribonuclease YbeY.